The following is a 211-amino-acid chain: Ribosomal RNA small subunit methyltransferase G (211 aa).

S-adenosyl-L-methionine is bound by residues Gly-73, 126 to 127 (IE), and Arg-142.

It belongs to the methyltransferase superfamily. RNA methyltransferase RsmG family.

The protein resides in the cytoplasm. It catalyses the reaction guanosine(527) in 16S rRNA + S-adenosyl-L-methionine = N(7)-methylguanosine(527) in 16S rRNA + S-adenosyl-L-homocysteine. Its function is as follows. Specifically methylates the N7 position of guanine in position 527 of 16S rRNA. The protein is Ribosomal RNA small subunit methyltransferase G of Methylorubrum extorquens (strain CM4 / NCIMB 13688) (Methylobacterium extorquens).